A 505-amino-acid polypeptide reads, in one-letter code: ATP synthase subunit alpha, cyanelle (505 aa).

170-177 (GDRQTGKT) is an ATP binding site.

This sequence belongs to the ATPase alpha/beta chains family. As to quaternary structure, F-type ATPases have 2 components, CF(1) - the catalytic core - and CF(0) - the membrane proton channel. CF(1) has five subunits: alpha(3), beta(3), gamma(1), delta(1), epsilon(1). CF(0) has four main subunits: a, b, b' and c.

It is found in the plastid. Its subcellular location is the cyanelle thylakoid membrane. It catalyses the reaction ATP + H2O + 4 H(+)(in) = ADP + phosphate + 5 H(+)(out). In terms of biological role, produces ATP from ADP in the presence of a proton gradient across the membrane. The alpha chain is a regulatory subunit. In Cyanophora paradoxa, this protein is ATP synthase subunit alpha, cyanelle.